Consider the following 47-residue polypeptide: Large ribosomal subunit protein bL34 (47 aa).

2 stretches are compositionally biased toward basic residues: residues 1–22 (MAKG…HGFR) and 36–47 (ARRRKGRKSLTA). Positions 1 to 47 (MAKGKRTFQPNNRRRSRVHGFRSRMSTRAGRAIVSARRRKGRKSLTA) are disordered.

This sequence belongs to the bacterial ribosomal protein bL34 family.

In Corynebacterium kroppenstedtii (strain DSM 44385 / JCM 11950 / CIP 105744 / CCUG 35717), this protein is Large ribosomal subunit protein bL34.